A 209-amino-acid polypeptide reads, in one-letter code: Protein-L-isoaspartate O-methyltransferase (209 aa).

S59 is an active-site residue.

It belongs to the methyltransferase superfamily. L-isoaspartyl/D-aspartyl protein methyltransferase family. Monomer.

Its subcellular location is the cytoplasm. It catalyses the reaction [protein]-L-isoaspartate + S-adenosyl-L-methionine = [protein]-L-isoaspartate alpha-methyl ester + S-adenosyl-L-homocysteine. In terms of biological role, catalyzes the methyl esterification of L-isoaspartyl residues in peptides and proteins that result from spontaneous decomposition of normal L-aspartyl and L-asparaginyl residues. It plays a role in the repair and/or degradation of damaged proteins. The sequence is that of Protein-L-isoaspartate O-methyltransferase (pcm) from Helicobacter pylori (strain J99 / ATCC 700824) (Campylobacter pylori J99).